We begin with the raw amino-acid sequence, 180 residues long: Prorelaxin (180 aa).

The first 25 residues, 1-25 (MLRLFLSHLLGVWLLLSLRARKIPA), serve as a signal peptide directing secretion. 3 disulfide bridges follow: Cys33–Cys167, Cys45–Cys180, and Cys166–Cys171. Residues 53-154 (SSQQHREPRQ…RSRLDAHSRI (102 aa)) constitute a propeptide, connecting peptide.

This sequence belongs to the insulin family. As to quaternary structure, heterodimer of a B chain and an A chain linked by two disulfide bonds. As to expression, expressed by the placenta. Exclusively detected in cells located in the lamellar placental labyrinth and absent from other placental and non-placental uterine parts.

The protein localises to the secreted. Functionally, relaxin is an ovarian hormone that acts with estrogen to produce dilatation of the birth canal in many mammals. The chain is Prorelaxin (RLN) from Felis catus (Cat).